The primary structure comprises 182 residues: uncharacterized protein (182 aa).

The Nudix hydrolase domain occupies 36-164 (LRHRATYIVV…TPDSLKALSL (129 aa)). The short motif at 73–95 (GGVVQSGENYLESARREAEEELG) is the Nudix box element. 2 residues coordinate Mg(2+): glutamate 89 and glutamate 93.

This sequence belongs to the Nudix hydrolase family. Requires Mg(2+) as cofactor.

This is an uncharacterized protein from Yersinia pestis.